The sequence spans 701 residues: Sodium/hydrogen exchanger 6 (701 aa).

The next 2 membrane-spanning stretches (helical) occupy residues Ser-71–Phe-91 and Gly-103–Pro-123. Residue Asn-128 is glycosylated (N-linked (GlcNAc...) asparagine). 8 helical membrane-spanning segments follow: residues Val-176–Gly-196, Ile-211–Tyr-231, Cys-252–His-272, Val-278–Leu-298, Ile-324–Val-344, Thr-372–Ile-392, Phe-414–Phe-434, and Phe-436–Gly-456. A Glycyl lysine isopeptide (Lys-Gly) (interchain with G-Cter in ubiquitin) cross-link involves residue Lys-475. The next 2 membrane-spanning stretches (helical) occupy residues Asn-479–Ile-499 and Leu-515–Cys-535.

It belongs to the monovalent cation:proton antiporter 1 (CPA1) transporter (TC 2.A.36) family. Homodimer. Interacts with RACK1; regulates the distribution of SLC9A6 between endosomes and the plasma membrane. Ubiquitinated (in vitro). Post-translationally, glycosylated. As to expression, ubiquitous. High expression in brain, skeletal muscle, and heart, but is also detected at lower levels in most other tissues.

It is found in the endosome membrane. Its subcellular location is the recycling endosome membrane. The protein resides in the early endosome membrane. The protein localises to the late endosome membrane. It localises to the cell membrane. The catalysed reaction is Na(+)(in) + H(+)(out) = Na(+)(out) + H(+)(in). The enzyme catalyses K(+)(in) + H(+)(out) = K(+)(out) + H(+)(in). Its function is as follows. Endosomal Na(+), K(+)/H(+) antiporter. Mediates the electroneutral exchange of endosomal luminal H(+) for a cytosolic Na(+) or K(+). By facilitating proton efflux, SLC9A6 counteracts the acidity generated by vacuolar (V)-ATPase, thereby limiting luminal acidification. Responsible for alkalizing and maintaining the endosomal pH, and consequently in, e.g., endosome maturation and trafficking of recycling endosomal cargo. Plays a critical role during neurodevelopment by regulating synaptic development and plasticity. Implicated in the maintenance of cell polarity in a manner that is dependent on its ability to modulate intravesicular pH. Regulates intracelular pH in some specialized cells, osteoclasts and stereocilia where this transporter localizes to the plasma membrane. In Homo sapiens (Human), this protein is Sodium/hydrogen exchanger 6.